The sequence spans 377 residues: Galactoside alpha-(1,2)-fucosyltransferase 1 (377 aa).

The Cytoplasmic segment spans residues 1-8; sequence MWTPSRRQ. A helical; Signal-anchor for type II membrane protein transmembrane segment spans residues 9-26; that stretch reads LCLAFLLVCVLSAGSFFF. The Lumenal segment spans residues 27 to 377; sequence HLNGGNFFRN…WKPDSLFRLV (351 aa). 3 N-linked (GlcNAc...) asparagine glycosylation sites follow: Asn67, Asn303, and Asn329.

Belongs to the glycosyltransferase 11 family. In terms of tissue distribution, in the adult, highly expressed in pancreas, testis and epididymis and to a lesser extent in thymus, lung, stomach, small intestine, colon, spleen and uterus. Not expressed in brain, heart, skeletal muscle, kidney, liver and bone marrow. Expressed in epididymis and testis.

It localises to the golgi apparatus. Its subcellular location is the golgi stack membrane. It carries out the reaction a beta-D-galactosyl-(1-&gt;4)-N-acetyl-beta-D-glucosaminyl derivative + GDP-beta-L-fucose = an alpha-L-Fuc-(1-&gt;2)-beta-D-Gal-(1-&gt;4)-beta-D-GlcNAc derivative + GDP + H(+). The enzyme catalyses a ganglioside GA1 + GDP-beta-L-fucose = a ganglioside Fuc-GA1 + GDP + H(+). The catalysed reaction is a beta-D-Gal-(1-&gt;3)-beta-D-GlcNAc-(1-&gt;3)-beta-D-Gal-(1-&gt;4)-beta-D-Glc-(1&lt;-&gt;1')-Cer(d18:1(4E)) + GDP-beta-L-fucose = alpha-L-fucosyl-(1-&gt;2)- beta-D-galactosyl-(1-&gt;3)-N-acetyl-beta-D-glucosaminyl-(1-&gt;3)-beta-D-galactosyl-(1-&gt;4)-beta-D-glucosyl-(1&lt;-&gt;1')-N-acylsphing-4-enine + GDP + H(+). It catalyses the reaction a neolactoside nLc4Cer(d18:1(4E)) + GDP-beta-L-fucose = a neolactoside IV(2)-alpha-Fuc-nLc4Cer(d18:1(4E)) + GDP + H(+). It carries out the reaction a ganglioside GM1 + GDP-beta-L-fucose = a ganglioside Fuc-GM1 + GDP + H(+). The enzyme catalyses beta-D-galactosyl-(1-&gt;3)-N-acetyl-D-galactosamine + GDP-beta-L-fucose = alpha-L-fucosyl-(1-&gt;2)-beta-D-galactosyl-(1-&gt;3)-N-acetyl-D-galactosamine + GDP + H(+). The protein operates within protein modification; protein glycosylation. Its function is as follows. Catalyzes the transfer of L-fucose, from a guanosine diphosphate-beta-L-fucose, to the terminal galactose residue of glycoconjugates through an alpha(1,2) linkage leading to H antigen synthesis that is an intermediate substrate in the synthesis of ABO blood group antigens. H antigen is essential for maturation of the glomerular layer of the main olfactory bulb, in cell migration and early cell-cell contacts during tumor associated angiogenesis. Preferentially fucosylates soluble lactose and to a lesser extent, fucosylates glycolipids gangliosides GA1 and GM1a. The chain is Galactoside alpha-(1,2)-fucosyltransferase 1 from Mus musculus (Mouse).